A 173-amino-acid chain; its full sequence is Photosystem I assembly protein Ycf3 (173 aa).

TPR repeat units lie at residues 35 to 68, 72 to 105, and 120 to 153; these read AFVY…EEDP, SYIL…NPRM, and GEKA…APNN.

Belongs to the Ycf3 family.

It localises to the cellular thylakoid membrane. Essential for the assembly of the photosystem I (PSI) complex. May act as a chaperone-like factor to guide the assembly of the PSI subunits. The polypeptide is Photosystem I assembly protein Ycf3 (Rippkaea orientalis (strain PCC 8801 / RF-1) (Cyanothece sp. (strain PCC 8801))).